Consider the following 502-residue polypeptide: ATP synthase subunit alpha (502 aa).

169–176 (GDRQTGKT) contacts ATP.

This sequence belongs to the ATPase alpha/beta chains family. In terms of assembly, F-type ATPases have 2 components, CF(1) - the catalytic core - and CF(0) - the membrane proton channel. CF(1) has five subunits: alpha(3), beta(3), gamma(1), delta(1), epsilon(1). CF(0) has three main subunits: a(1), b(2) and c(9-12). The alpha and beta chains form an alternating ring which encloses part of the gamma chain. CF(1) is attached to CF(0) by a central stalk formed by the gamma and epsilon chains, while a peripheral stalk is formed by the delta and b chains.

The protein resides in the cell inner membrane. The catalysed reaction is ATP + H2O + 4 H(+)(in) = ADP + phosphate + 5 H(+)(out). Its function is as follows. Produces ATP from ADP in the presence of a proton gradient across the membrane. The alpha chain is a regulatory subunit. The polypeptide is ATP synthase subunit alpha (Desulfovibrio desulfuricans (strain ATCC 27774 / DSM 6949 / MB)).